Consider the following 237-residue polypeptide: Protein GrpE (237 aa).

A disordered region spans residues 1-65 (MTDSYKLPDN…DAREDDRDPT (65 aa)). Over residues 55-65 (VDAREDDRDPT) the composition is skewed to basic and acidic residues.

The protein belongs to the GrpE family. As to quaternary structure, homodimer.

The protein resides in the cytoplasm. Participates actively in the response to hyperosmotic and heat shock by preventing the aggregation of stress-denatured proteins, in association with DnaK and GrpE. It is the nucleotide exchange factor for DnaK and may function as a thermosensor. Unfolded proteins bind initially to DnaJ; upon interaction with the DnaJ-bound protein, DnaK hydrolyzes its bound ATP, resulting in the formation of a stable complex. GrpE releases ADP from DnaK; ATP binding to DnaK triggers the release of the substrate protein, thus completing the reaction cycle. Several rounds of ATP-dependent interactions between DnaJ, DnaK and GrpE are required for fully efficient folding. This Corynebacterium efficiens (strain DSM 44549 / YS-314 / AJ 12310 / JCM 11189 / NBRC 100395) protein is Protein GrpE.